We begin with the raw amino-acid sequence, 160 residues long: Phosphopantetheine adenylyltransferase (160 aa).

Substrate is bound at residue S9. ATP is bound by residues 9-10 (SL) and H17. Positions 41, 74, and 88 each coordinate substrate. Residues 89–91 (GIR), E99, and 123–129 (YLHLSST) each bind ATP.

This sequence belongs to the bacterial CoaD family. As to quaternary structure, homohexamer. It depends on Mg(2+) as a cofactor.

The protein localises to the cytoplasm. The catalysed reaction is (R)-4'-phosphopantetheine + ATP + H(+) = 3'-dephospho-CoA + diphosphate. It functions in the pathway cofactor biosynthesis; coenzyme A biosynthesis; CoA from (R)-pantothenate: step 4/5. Reversibly transfers an adenylyl group from ATP to 4'-phosphopantetheine, yielding dephospho-CoA (dPCoA) and pyrophosphate. This chain is Phosphopantetheine adenylyltransferase, found in Renibacterium salmoninarum (strain ATCC 33209 / DSM 20767 / JCM 11484 / NBRC 15589 / NCIMB 2235).